A 120-amino-acid polypeptide reads, in one-letter code: MFLLYEYDIFWAFLIISSLIPILAFFISGVLAPISKGPEKLSSYESGIEPMGNAWLQFRIRYYMFALVFVVFDVETVFLYPWAMSFDVLGVSVFIEALIFVLILIVGLVYAWRKGALEWS.

3 helical membrane passes run 9–29, 64–84, and 88–108; these read IFWAFLIISSLIPILAFFISG, MFALVFVVFDVETVFLYPWAM, and VLGVSVFIEALIFVLILIVGL.

The protein belongs to the complex I subunit 3 family. NDH is composed of at least 16 different subunits, 5 of which are encoded in the nucleus.

It is found in the plastid. It localises to the chloroplast thylakoid membrane. The enzyme catalyses a plastoquinone + NADH + (n+1) H(+)(in) = a plastoquinol + NAD(+) + n H(+)(out). It carries out the reaction a plastoquinone + NADPH + (n+1) H(+)(in) = a plastoquinol + NADP(+) + n H(+)(out). NDH shuttles electrons from NAD(P)H:plastoquinone, via FMN and iron-sulfur (Fe-S) centers, to quinones in the photosynthetic chain and possibly in a chloroplast respiratory chain. The immediate electron acceptor for the enzyme in this species is believed to be plastoquinone. Couples the redox reaction to proton translocation, and thus conserves the redox energy in a proton gradient. The polypeptide is NAD(P)H-quinone oxidoreductase subunit 3, chloroplastic (Panax ginseng (Korean ginseng)).